The sequence spans 619 residues: Chaperone protein HscA homolog (619 aa).

It belongs to the heat shock protein 70 family.

Its function is as follows. Chaperone involved in the maturation of iron-sulfur cluster-containing proteins. Has a low intrinsic ATPase activity which is markedly stimulated by HscB. This chain is Chaperone protein HscA homolog, found in Shewanella denitrificans (strain OS217 / ATCC BAA-1090 / DSM 15013).